We begin with the raw amino-acid sequence, 209 residues long: Uracil phosphoribosyltransferase (209 aa).

5-phospho-alpha-D-ribose 1-diphosphate is bound by residues arginine 77, arginine 102, and 129–137; that span reads DPMLATGVS. Uracil contacts are provided by residues isoleucine 192 and 197–199; that span reads GDA. Aspartate 198 is a 5-phospho-alpha-D-ribose 1-diphosphate binding site.

This sequence belongs to the UPRTase family. It depends on Mg(2+) as a cofactor.

It carries out the reaction UMP + diphosphate = 5-phospho-alpha-D-ribose 1-diphosphate + uracil. Its pathway is pyrimidine metabolism; UMP biosynthesis via salvage pathway; UMP from uracil: step 1/1. With respect to regulation, allosterically activated by GTP. Functionally, catalyzes the conversion of uracil and 5-phospho-alpha-D-ribose 1-diphosphate (PRPP) to UMP and diphosphate. In Metamycoplasma arthritidis (strain 158L3-1) (Mycoplasma arthritidis), this protein is Uracil phosphoribosyltransferase.